The primary structure comprises 210 residues: Regulator of G-protein signaling 17 (210 aa).

A disordered region spans residues 1 to 21 (MRKRQQSQNEGTSAVSQAPGN). The region spanning 84 to 200 (NFDKMMKTPA…LNSQIYKSLV (117 aa)) is the RGS domain.

In terms of assembly, interacts with GNAI1 and GNAQ. Interacts with GNAZ and GNAI2. Forms a complex with mu-opioid receptors and G(alpha)z/i2 subunits, including GNAZ and GNAI2; the formation of this complex results in mu-opioid receptor desensitization. Post-translationally, N- and O-glycosylated in synapsomal membranes. Serine phosphorylated in synapsomal membranes. In terms of processing, sumoylated with SUMO1 and SUM02 in synaptosomes. The sumoylated forms act as a scaffold for sequestering mu-opioid receptor-activated G(alpha) subunits.

The protein localises to the membrane. The protein resides in the synapse. It is found in the synaptosome. Its subcellular location is the nucleus. It localises to the cytoplasm. Regulates G protein-coupled receptor signaling cascades, including signaling via muscarinic acetylcholine receptor CHRM2 and dopamine receptor DRD2. Inhibits signal transduction by increasing the GTPase activity of G protein alpha subunits, thereby driving them into their inactive GDP-bound form. Binds selectively to GNAZ and GNAI2 subunits, accelerates their GTPase activity and regulates their signaling activities. Negatively regulates mu-opioid receptor-mediated activation of the G-proteins. This chain is Regulator of G-protein signaling 17 (RGS17), found in Gallus gallus (Chicken).